Here is a 449-residue protein sequence, read N- to C-terminus: Maltose-6'-phosphate glucosidase (449 aa).

6–72 contributes to the NAD(+) binding site; that stretch reads FSIVIAGGGS…PDIEFAATTD (67 aa). Substrate is bound by residues R95 and N149. C171 provides a ligand contact to Mn(2+). The active-site Proton donor is D172. Position 202 (H202) interacts with Mn(2+). Catalysis depends on Y265, which acts as the Proton acceptor. R285 is a substrate binding site.

It belongs to the glycosyl hydrolase 4 family. As to quaternary structure, homotetramer. Mn(2+) serves as cofactor. The cofactor is Fe(2+). Co(2+) is required as a cofactor. It depends on Ni(2+) as a cofactor. Requires NAD(+) as cofactor.

It carries out the reaction alpha-maltose 6'-phosphate + H2O = D-glucose 6-phosphate + D-glucose. Cellobiose-6'-phosphate and 6-phospho-beta-D-glucopyranoside are not substrates but competitive inhibitors of GlvA. Functionally, hydrolyzes maltose-6'-phosphate and trehalose-6'-phosphate. Is involved in the catabolism of alpha-glycosides accumulated via a phosphoenolpyruvate-dependent maltose phosphotransferase system (PEP-PTS). Is also able to significantly catalyze the hydrolysis of both 6-phospho-alpha- and 6-phospho-beta-glucosides containing activated leaving groups such as p-nitrophenol and does so with retention and inversion, respectively, of the substrate anomeric configuration. The sequence is that of Maltose-6'-phosphate glucosidase (glvA) from Bacillus subtilis (strain 168).